Consider the following 167-residue polypeptide: Translation initiation factor IF-3 (167 aa).

It belongs to the IF-3 family. As to quaternary structure, monomer.

It is found in the cytoplasm. IF-3 binds to the 30S ribosomal subunit and shifts the equilibrium between 70S ribosomes and their 50S and 30S subunits in favor of the free subunits, thus enhancing the availability of 30S subunits on which protein synthesis initiation begins. This is Translation initiation factor IF-3 from Bacillus cereus (strain ATCC 14579 / DSM 31 / CCUG 7414 / JCM 2152 / NBRC 15305 / NCIMB 9373 / NCTC 2599 / NRRL B-3711).